We begin with the raw amino-acid sequence, 426 residues long: Glutamate-1-semialdehyde 2,1-aminomutase (426 aa).

Lys-265 is subject to N6-(pyridoxal phosphate)lysine.

This sequence belongs to the class-III pyridoxal-phosphate-dependent aminotransferase family. HemL subfamily. In terms of assembly, homodimer. Requires pyridoxal 5'-phosphate as cofactor.

It localises to the cytoplasm. It carries out the reaction (S)-4-amino-5-oxopentanoate = 5-aminolevulinate. It participates in porphyrin-containing compound metabolism; protoporphyrin-IX biosynthesis; 5-aminolevulinate from L-glutamyl-tRNA(Glu): step 2/2. The protein is Glutamate-1-semialdehyde 2,1-aminomutase of Salmonella heidelberg (strain SL476).